We begin with the raw amino-acid sequence, 639 residues long: Polypeptide N-acetylgalactosaminyltransferase 15 (639 aa).

The Cytoplasmic segment spans residues 1 to 11; the sequence is MLLRKRYRHRP. A helical; Signal-anchor for type II membrane protein membrane pass occupies residues 12 to 34; sequence CRLQFLLLLLMLGCVLMMVAMLH. Over 35–639 the chain is Lumenal; it reads PPHHTLHQTV…FDQINAVDER (605 aa). Residues 106-155 form a disordered region; sequence RNQSQGRRGGSYRLIKQPRRQDKEAPKRDWGADEDGEVSEEEELTPFSLD. Residue asparagine 107 is glycosylated (N-linked (GlcNAc...) asparagine). A compositionally biased stretch (basic and acidic residues) spans 124 to 136; the sequence is RRQDKEAPKRDWG. Residues 137–149 are compositionally biased toward acidic residues; it reads ADEDGEVSEEEEL. 5 disulfides stabilise this stretch: cysteine 181-cysteine 412, cysteine 403-cysteine 482, cysteine 517-cysteine 536, cysteine 562-cysteine 575, and cysteine 603-cysteine 620. The interval 190-299 is catalytic subdomain A; the sequence is LPTASVILCF…PGWLEPLLSR (110 aa). Residues aspartate 231 and arginine 260 each coordinate substrate. Aspartate 283, histidine 285, and histidine 417 together coordinate Mn(2+). The segment at 358-420 is catalytic subdomain B; that stretch reads PIRSPVVPGE…PCSRVGHIYQ (63 aa). Positions 504–631 constitute a Ricin B-type lectin domain; sequence SFSGKLHNTG…GKARQQWRFD (128 aa). Asparagine 574 carries an N-linked (GlcNAc...) asparagine glycan.

This sequence belongs to the glycosyltransferase 2 family. GalNAc-T subfamily. Requires Mn(2+) as cofactor. As to expression, widely expressed. Highly expressed in small intestine, placenta, spleen, cerebral cortex and ovary. Expressed at intermediate level in uterus, mammary gland, stomach, cerebellum and whole brain. Weakly expressed in fetal brain, bone marrow, thyroid gland, thymus, heart, skeletal muscle, lung, liver, colon, pancreas, kidney and testis. Not expressed in leukocyte. Expressed in both normal and osteoarthritic cartilage. Expressed at low level in chondrocytes in all zones of both normal and osteoarthritic cartilage.

The protein localises to the golgi apparatus membrane. The enzyme catalyses L-seryl-[protein] + UDP-N-acetyl-alpha-D-galactosamine = a 3-O-[N-acetyl-alpha-D-galactosaminyl]-L-seryl-[protein] + UDP + H(+). It carries out the reaction L-threonyl-[protein] + UDP-N-acetyl-alpha-D-galactosamine = a 3-O-[N-acetyl-alpha-D-galactosaminyl]-L-threonyl-[protein] + UDP + H(+). The protein operates within protein modification; protein glycosylation. Functionally, catalyzes the initial reaction in O-linked oligosaccharide biosynthesis, the transfer of an N-acetyl-D-galactosamine residue to a serine or threonine residue on the protein receptor. Although it displays a much weaker activity toward all substrates tested compared to GALNT2, it is able to transfer up to seven GalNAc residues to the Muc5AC peptide, suggesting that it can fill vicinal Thr/Ser residues in cooperation with other GALNT proteins. Prefers Muc1a as substrate. The polypeptide is Polypeptide N-acetylgalactosaminyltransferase 15 (GALNT15) (Homo sapiens (Human)).